A 69-amino-acid polypeptide reads, in one-letter code: uncharacterized protein (69 aa).

The Cytoplasmic portion of the chain corresponds to 1 to 15 (MLLYIVIIVACIISK). The helical transmembrane segment at 16 to 36 (LVPNEYWAIHLFFIIMIFMVY) threads the bilayer. Over 37 to 69 (MYEKLDIHQKYQFWNYTMSGLSGHNVQITCKCY) the chain is Extracellular. Asparagine 51 carries an N-linked (GlcNAc...) asparagine; by host glycan.

This sequence belongs to the asfivirus X69R family.

It is found in the host membrane. This is an uncharacterized protein from Ornithodoros (relapsing fever ticks).